Here is a 361-residue protein sequence, read N- to C-terminus: Molybdenum import ATP-binding protein ModC (361 aa).

The ABC transporter domain occupies 1–228 (MLNINIEKQF…EQMRPWVPLQ (228 aa)). 31-38 (GRSGAGKT) serves as a coordination point for ATP. The Mop domain maps to 289–356 (GSSIRNLLRG…IKGVTMTQMD (68 aa)).

This sequence belongs to the ABC transporter superfamily. Molybdate importer (TC 3.A.1.8) family. The complex is composed of two ATP-binding proteins (ModC), two transmembrane proteins (ModB) and a solute-binding protein (ModA).

It localises to the cell inner membrane. It catalyses the reaction molybdate(out) + ATP + H2O = molybdate(in) + ADP + phosphate + H(+). Part of the ABC transporter complex ModABC involved in molybdenum import. Responsible for energy coupling to the transport system. In Shewanella sp. (strain MR-4), this protein is Molybdenum import ATP-binding protein ModC.